Reading from the N-terminus, the 168-residue chain is 3-hydroxyacyl-[acyl-carrier-protein] dehydratase FabZ (168 aa).

Residue H54 is part of the active site.

The protein belongs to the thioester dehydratase family. FabZ subfamily.

The protein resides in the cytoplasm. The enzyme catalyses a (3R)-hydroxyacyl-[ACP] = a (2E)-enoyl-[ACP] + H2O. In terms of biological role, involved in unsaturated fatty acids biosynthesis. Catalyzes the dehydration of short chain beta-hydroxyacyl-ACPs and long chain saturated and unsaturated beta-hydroxyacyl-ACPs. This chain is 3-hydroxyacyl-[acyl-carrier-protein] dehydratase FabZ, found in Yersinia enterocolitica serotype O:8 / biotype 1B (strain NCTC 13174 / 8081).